The chain runs to 605 residues: Conglutin beta 7 (605 aa).

A signal peptide spans 1–30 (MARMRVRFPTLVLLLGILFLMAVSIGIAYG). The span at 37–105 (NHERPGEREH…REPCREREQE (69 aa)) shows a compositional bias: basic and acidic residues. Disordered regions lie at residues 37 to 193 (NHER…RFQT), 346 to 367 (LGNEDEQEDEEQRRGQEQSYQD), and 382 to 405 (LRKHAQSSSRKGKPSESGPFNLRS). Over residues 140-149 (QGSSSSSRKQ) the composition is skewed to low complexity. A compositionally biased stretch (basic and acidic residues) spans 150–179 (SGYERRQYHERREQRDEKEKEQDSRSDSRR). Residues 184–342 (YHFSSERFQT…TFNTRYEEIQ (159 aa)) enclose the Cupin type-1 1 domain. Positions 401 to 563 (FNLRSNESIY…TFPGSAQDVE (163 aa)) constitute a Cupin type-1 2 domain. Asn-406 and Asn-513 each carry an N-linked (GlcNAc...) asparagine glycan. Positions 574–593 (FANAQPQQKQQREKEGRRGR) are disordered.

The protein belongs to the 7S seed storage protein family. Component of globulins complexes which accumulate in seeds.

Seed storage protein. Accumulates during seed development and is hydrolyzed after germination to provide a carbon and nitrogen source for the developing seedling. This is Conglutin beta 7 from Lupinus angustifolius (Narrow-leaved blue lupine).